The chain runs to 362 residues: 3-dehydroquinate synthase (362 aa).

Residues 71–76 (DGEQYK), 105–109 (GVVGD), 129–130 (TT), K142, K151, and 169–172 (CLKT) contribute to the NAD(+) site. Zn(2+)-binding residues include E184, H247, and H264.

It belongs to the sugar phosphate cyclases superfamily. Dehydroquinate synthase family. The cofactor is Co(2+). Requires Zn(2+) as cofactor. NAD(+) is required as a cofactor.

Its subcellular location is the cytoplasm. The enzyme catalyses 7-phospho-2-dehydro-3-deoxy-D-arabino-heptonate = 3-dehydroquinate + phosphate. Its pathway is metabolic intermediate biosynthesis; chorismate biosynthesis; chorismate from D-erythrose 4-phosphate and phosphoenolpyruvate: step 2/7. In terms of biological role, catalyzes the conversion of 3-deoxy-D-arabino-heptulosonate 7-phosphate (DAHP) to dehydroquinate (DHQ). This is 3-dehydroquinate synthase from Escherichia coli O127:H6 (strain E2348/69 / EPEC).